Here is a 178-residue protein sequence, read N- to C-terminus: MAFPTTEILSALIEPLAASHKFDLEGLKVTKAGPKSAVAIKVDSDSRPDLDQLEVFSQEIGELFDAAEQRGELNFGAGYTLEVSTPGVDNPLTLPRHWRRNRGRLVALDQDGKKRVARIGALNDAETHVVLIERNKKLLEVTTLELAHSPRAVVEIEFAKPAQDETALAESTFDEATA.

This sequence belongs to the RimP family.

The protein resides in the cytoplasm. Its function is as follows. Required for maturation of 30S ribosomal subunits. This chain is Ribosome maturation factor RimP, found in Corynebacterium glutamicum (strain ATCC 13032 / DSM 20300 / JCM 1318 / BCRC 11384 / CCUG 27702 / LMG 3730 / NBRC 12168 / NCIMB 10025 / NRRL B-2784 / 534).